A 562-amino-acid polypeptide reads, in one-letter code: Dihydroxy-acid dehydratase (562 aa).

Residue C51 participates in [2Fe-2S] cluster binding. D83 lines the Mg(2+) pocket. [2Fe-2S] cluster is bound at residue C124. The Mg(2+) site is built by D125 and K126. K126 carries the N6-carboxylysine modification. C196 is a [2Fe-2S] cluster binding site. A Mg(2+)-binding site is contributed by E448. The Proton acceptor role is filled by S474.

This sequence belongs to the IlvD/Edd family. In terms of assembly, homodimer. [2Fe-2S] cluster is required as a cofactor. Requires Mg(2+) as cofactor.

It carries out the reaction (2R)-2,3-dihydroxy-3-methylbutanoate = 3-methyl-2-oxobutanoate + H2O. It catalyses the reaction (2R,3R)-2,3-dihydroxy-3-methylpentanoate = (S)-3-methyl-2-oxopentanoate + H2O. The protein operates within amino-acid biosynthesis; L-isoleucine biosynthesis; L-isoleucine from 2-oxobutanoate: step 3/4. It participates in amino-acid biosynthesis; L-valine biosynthesis; L-valine from pyruvate: step 3/4. Functionally, functions in the biosynthesis of branched-chain amino acids. Catalyzes the dehydration of (2R,3R)-2,3-dihydroxy-3-methylpentanoate (2,3-dihydroxy-3-methylvalerate) into 2-oxo-3-methylpentanoate (2-oxo-3-methylvalerate) and of (2R)-2,3-dihydroxy-3-methylbutanoate (2,3-dihydroxyisovalerate) into 2-oxo-3-methylbutanoate (2-oxoisovalerate), the penultimate precursor to L-isoleucine and L-valine, respectively. The sequence is that of Dihydroxy-acid dehydratase from Pyrobaculum aerophilum (strain ATCC 51768 / DSM 7523 / JCM 9630 / CIP 104966 / NBRC 100827 / IM2).